We begin with the raw amino-acid sequence, 243 residues long: Uridylate kinase (243 aa).

Position 15–18 (15–18 (KLSG)) interacts with ATP. The segment at 23–28 (GEEGFG) is involved in allosteric activation by GTP. Position 57 (glycine 57) interacts with UMP. ATP contacts are provided by glycine 58 and arginine 62. UMP is bound by residues aspartate 77 and 138–145 (TGNPFCTT). ATP contacts are provided by threonine 165, tyrosine 171, and aspartate 174.

The protein belongs to the UMP kinase family. In terms of assembly, homohexamer.

It is found in the cytoplasm. It carries out the reaction UMP + ATP = UDP + ADP. Its pathway is pyrimidine metabolism; CTP biosynthesis via de novo pathway; UDP from UMP (UMPK route): step 1/1. Allosterically activated by GTP. Inhibited by UTP. Functionally, catalyzes the reversible phosphorylation of UMP to UDP. This is Uridylate kinase from Shewanella denitrificans (strain OS217 / ATCC BAA-1090 / DSM 15013).